We begin with the raw amino-acid sequence, 550 residues long: CTP synthase (550 aa).

The amidoligase domain stretch occupies residues 1 to 270; that stretch reads MTKYVFVTGG…DRIICEELKL (270 aa). Ser-13 is a CTP binding site. Ser-13 lines the UTP pocket. Residues 14–19 and Asp-71 contribute to the ATP site; that span reads SLGKGI. Mg(2+)-binding residues include Asp-71 and Glu-144. Residues 151–153, 191–196, and Lys-227 contribute to the CTP site; these read DIE and KTKPTQ. Residues 191–196 and Lys-227 contribute to the UTP site; that span reads KTKPTQ. Positions 295-547 constitute a Glutamine amidotransferase type-1 domain; sequence TIGMVGKYVD…VEAALANKQA (253 aa). Gly-356 serves as a coordination point for L-glutamine. The Nucleophile; for glutamine hydrolysis role is filled by Cys-383. L-glutamine-binding positions include 384–387, Glu-407, and Arg-473; that span reads LGMQ. Active-site residues include His-520 and Glu-522.

It belongs to the CTP synthase family. As to quaternary structure, homotetramer.

The enzyme catalyses UTP + L-glutamine + ATP + H2O = CTP + L-glutamate + ADP + phosphate + 2 H(+). The catalysed reaction is L-glutamine + H2O = L-glutamate + NH4(+). It catalyses the reaction UTP + NH4(+) + ATP = CTP + ADP + phosphate + 2 H(+). It participates in pyrimidine metabolism; CTP biosynthesis via de novo pathway; CTP from UDP: step 2/2. Allosterically activated by GTP, when glutamine is the substrate; GTP has no effect on the reaction when ammonia is the substrate. The allosteric effector GTP functions by stabilizing the protein conformation that binds the tetrahedral intermediate(s) formed during glutamine hydrolysis. Inhibited by the product CTP, via allosteric rather than competitive inhibition. Catalyzes the ATP-dependent amination of UTP to CTP with either L-glutamine or ammonia as the source of nitrogen. Regulates intracellular CTP levels through interactions with the four ribonucleotide triphosphates. This Burkholderia lata (strain ATCC 17760 / DSM 23089 / LMG 22485 / NCIMB 9086 / R18194 / 383) protein is CTP synthase.